The chain runs to 310 residues: Malonyl CoA-acyl carrier protein transacylase (310 aa).

Active-site residues include Ser-93 and His-201.

Belongs to the FabD family.

The catalysed reaction is holo-[ACP] + malonyl-CoA = malonyl-[ACP] + CoA. The protein operates within lipid metabolism; fatty acid biosynthesis. The sequence is that of Malonyl CoA-acyl carrier protein transacylase (fabD) from Buchnera aphidicola subsp. Schizaphis graminum (strain Sg).